Reading from the N-terminus, the 400-residue chain is Elongation factor Tu (400 aa).

A tr-type G domain is found at 10 to 209 (KPHVNVGTIG…AVDSYIPTPE (200 aa)). A G1 region spans residues 19-26 (GHVDHGKT). 19 to 26 (GHVDHGKT) contacts GTP. Threonine 26 is a Mg(2+) binding site. Positions 60–64 (GITIS) are G2. The interval 81 to 84 (DCPG) is G3. GTP contacts are provided by residues 81-85 (DCPGH) and 136-139 (NKAD). Residues 136-139 (NKAD) form a G4 region. The G5 stretch occupies residues 174–176 (SGL).

Belongs to the TRAFAC class translation factor GTPase superfamily. Classic translation factor GTPase family. EF-Tu/EF-1A subfamily. In terms of assembly, monomer.

It is found in the cytoplasm. The catalysed reaction is GTP + H2O = GDP + phosphate + H(+). In terms of biological role, GTP hydrolase that promotes the GTP-dependent binding of aminoacyl-tRNA to the A-site of ribosomes during protein biosynthesis. The sequence is that of Elongation factor Tu from Desulfitobacterium hafniense (strain DSM 10664 / DCB-2).